Here is an 838-residue protein sequence, read N- to C-terminus: Probable inorganic carbon transporter subunit DabA (838 aa).

Residues Cys-353, Asp-355, His-537, and Cys-552 each contribute to the Zn(2+) site.

It belongs to the inorganic carbon transporter (TC 9.A.2) DabA family. In terms of assembly, forms a complex with DabB. Zn(2+) serves as cofactor.

Its subcellular location is the cell membrane. In terms of biological role, part of an energy-coupled inorganic carbon pump. The protein is Probable inorganic carbon transporter subunit DabA of Roseiflexus sp. (strain RS-1).